A 1732-amino-acid chain; its full sequence is Serine/threonine-protein kinase MRCK alpha (1732 aa).

The Protein kinase domain maps to 77–343; it reads FEILKVIGRG…IEDFKKHPFF (267 aa). ATP contacts are provided by residues 83–91 and lysine 106; that span reads IGRGAFGEV. Catalysis depends on aspartate 201, which acts as the Proton acceptor. Residues serine 222 and serine 234 each carry the phosphoserine; by autocatalysis modification. The residue at position 240 (threonine 240) is a Phosphothreonine; by autocatalysis. An AGC-kinase C-terminal domain is found at 344–414; the sequence is SGIDWDNIRN…TSSCVLSDRS (71 aa). 2 coiled-coil regions span residues 437–820 and 880–943; these read NNLA…WEAQ and LELQ…SEKG. Positions 968–1003 are disordered; the sequence is ERSPSCTPASKGRRTVDSTPLSVHTPTLRKKGCPGS. The Phorbol-ester/DAG-type zinc finger occupies 1012 to 1062; it reads THQFFVKSFTTPTKCHQCTSLMVGLIRQGCSCEVCGFSCHITCVNKAPTTC. A PH domain is found at 1082 to 1201; sequence GTAYEGHVRI…WVGVLSELHK (120 aa). Serine 1127 is modified (phosphoserine). In terms of domain architecture, CNH spans 1227-1499; it reads IKTTQAAAII…RPLNNEGSLN (273 aa). Phosphoserine is present on serine 1545. A CRIB domain is found at 1571-1584; the sequence is ISNPTNFNHIAHMG. Residues 1591-1732 are disordered; sequence ILKDLPMNPR…ESTDRGSWDP (142 aa). Polar residues predominate over residues 1604 to 1619; that stretch reads SRTVFSGSVSIPSITK. 7 positions are modified to phosphoserine: serine 1611, serine 1613, serine 1629, serine 1651, serine 1664, serine 1669, and serine 1693. Residues 1625–1640 are compositionally biased toward low complexity; it reads GRSMSASSGLSARSSA. Positions 1665-1674 are enriched in low complexity; it reads PSEGSLSSGG. Residues 1697–1707 are compositionally biased toward low complexity; that stretch reads STASNSSNLSS. Phosphoserine is present on residues serine 1719 and serine 1721.

The protein belongs to the protein kinase superfamily. AGC Ser/Thr protein kinase family. DMPK subfamily. As to quaternary structure, homodimer and homotetramer via the coiled coil regions. Interacts tightly with GTP-bound but not GDP-bound CDC42. Forms a tripartite complex with MYO18A and LURAP1 with the latter acting as an adapter connecting CDC42BPA and MYO18A. LURAP1 binding results in activation of CDC42BPA by abolition of its negative autoregulation. Interacts with LURAP1. Interacts (via AGC-kinase C-terminal domain) with FAM89B/LRAP25 (via LRR repeat). Forms a tripartite complex with FAM89B/LRAP25 and LIMK1. Mg(2+) is required as a cofactor. Proteolytically cleaved by caspases upon apoptosis induction. The cleavage at Asp-478 by CASP3 increases its kinase activity (in vitro). In terms of tissue distribution, abundant in the heart, brain, skeletal muscle, kidney, and pancreas, with little or no expression in the lung and liver.

The protein localises to the cytoplasm. It is found in the cell projection. The protein resides in the lamellipodium. It carries out the reaction L-seryl-[protein] + ATP = O-phospho-L-seryl-[protein] + ADP + H(+). The enzyme catalyses L-threonyl-[protein] + ATP = O-phospho-L-threonyl-[protein] + ADP + H(+). With respect to regulation, maintained in an inactive, closed conformation by an interaction between the kinase domain and the negative autoregulatory C-terminal coiled-coil region. Agonist binding to the phorbol ester binding site disrupts this, releasing the kinase domain to allow N-terminus-mediated dimerization and kinase activation by transautophosphorylation. Inhibited by chelerythrine chloride. Functionally, serine/threonine-protein kinase which is an important downstream effector of CDC42 and plays a role in the regulation of cytoskeleton reorganization and cell migration. Regulates actin cytoskeletal reorganization via phosphorylation of PPP1R12C and MYL9/MLC2. In concert with MYO18A and LURAP1, is involved in modulating lamellar actomyosin retrograde flow that is crucial to cell protrusion and migration. Phosphorylates: PPP1R12A, LIMK1 and LIMK2. May play a role in TFRC-mediated iron uptake. In concert with FAM89B/LRAP25 mediates the targeting of LIMK1 to the lamellipodium resulting in its activation and subsequent phosphorylation of CFL1 which is important for lamellipodial F-actin regulation. Triggers the formation of an extrusion apical actin ring required for epithelial extrusion of apoptotic cells. The protein is Serine/threonine-protein kinase MRCK alpha of Homo sapiens (Human).